The following is a 281-amino-acid chain: Bifunctional protein FolD (281 aa).

NADP(+)-binding positions include 165 to 167 (GRG), Thr-192, and Val-233.

The protein belongs to the tetrahydrofolate dehydrogenase/cyclohydrolase family. In terms of assembly, homodimer.

It catalyses the reaction (6R)-5,10-methylene-5,6,7,8-tetrahydrofolate + NADP(+) = (6R)-5,10-methenyltetrahydrofolate + NADPH. The catalysed reaction is (6R)-5,10-methenyltetrahydrofolate + H2O = (6R)-10-formyltetrahydrofolate + H(+). Its pathway is one-carbon metabolism; tetrahydrofolate interconversion. Catalyzes the oxidation of 5,10-methylenetetrahydrofolate to 5,10-methenyltetrahydrofolate and then the hydrolysis of 5,10-methenyltetrahydrofolate to 10-formyltetrahydrofolate. This is Bifunctional protein FolD from Mycobacterium bovis (strain BCG / Tokyo 172 / ATCC 35737 / TMC 1019).